Here is a 246-residue protein sequence, read N- to C-terminus: Phosphatidylserine decarboxylase proenzyme (246 aa).

The active-site Schiff-base intermediate with substrate; via pyruvic acid is the Ser204. Residue Ser204 is modified to Pyruvic acid (Ser); by autocatalysis.

Belongs to the phosphatidylserine decarboxylase family. PSD-A subfamily. Heterodimer of a large membrane-associated beta subunit and a small pyruvoyl-containing alpha subunit. It depends on pyruvate as a cofactor. Is synthesized initially as an inactive proenzyme. Formation of the active enzyme involves a self-maturation process in which the active site pyruvoyl group is generated from an internal serine residue via an autocatalytic post-translational modification. Two non-identical subunits are generated from the proenzyme in this reaction, and the pyruvate is formed at the N-terminus of the alpha chain, which is derived from the carboxyl end of the proenzyme. The post-translation cleavage follows an unusual pathway, termed non-hydrolytic serinolysis, in which the side chain hydroxyl group of the serine supplies its oxygen atom to form the C-terminus of the beta chain, while the remainder of the serine residue undergoes an oxidative deamination to produce ammonia and the pyruvoyl prosthetic group on the alpha chain.

Its subcellular location is the cell membrane. The catalysed reaction is a 1,2-diacyl-sn-glycero-3-phospho-L-serine + H(+) = a 1,2-diacyl-sn-glycero-3-phosphoethanolamine + CO2. It functions in the pathway phospholipid metabolism; phosphatidylethanolamine biosynthesis; phosphatidylethanolamine from CDP-diacylglycerol: step 2/2. Functionally, catalyzes the formation of phosphatidylethanolamine (PtdEtn) from phosphatidylserine (PtdSer). This Zymomonas mobilis subsp. mobilis (strain ATCC 31821 / ZM4 / CP4) protein is Phosphatidylserine decarboxylase proenzyme.